The chain runs to 496 residues: Fibronectin type III and SPRY domain-containing protein 1 (496 aa).

Residues 4-99 (QREALRKIIT…ALESSEELLE (96 aa)) adopt a coiled-coil conformation. One can recognise a COS domain in the interval 105 to 162 (LQAMDREDFPQAAKQIKDGVTMAPAFRLSLKAKVSDNMSHLMVDFAQERQMLQALKFL). Positions 164-268 (VPSAPVIDLA…EPVTLETPAF (105 aa)) constitute a Fibronectin type-III domain. A B30.2/SPRY domain is found at 268-477 (FMFRLDASTS…VTTGLQVPSS (210 aa)). A disordered region spans residues 301–336 (KAREKDGKGRTASPINSPARGTPSPKRMPSGRGGRD). Omega-N-methylarginine is present on residues R310 and R320.

As to quaternary structure, oligomerization is required for binding to microtubules.

It is found in the cytoplasm. The protein localises to the cytoskeleton. The protein resides in the microtubule organizing center. It localises to the centrosome. Its subcellular location is the nucleus. It is found in the cleavage furrow. May be involved in microtubule organization and stabilization. This Macaca fascicularis (Crab-eating macaque) protein is Fibronectin type III and SPRY domain-containing protein 1 (FSD1).